A 191-amino-acid chain; its full sequence is Elongation factor P (191 aa).

Position 34 is an N6-(3,6-diaminohexanoyl)-5-hydroxylysine (K34).

This sequence belongs to the elongation factor P family. In terms of processing, may be beta-lysylated on the epsilon-amino group of Lys-34 by the combined action of EpmA and EpmB, and then hydroxylated on the C5 position of the same residue by EpmC (if this protein is present). Lysylation is critical for the stimulatory effect of EF-P on peptide-bond formation. The lysylation moiety may extend toward the peptidyltransferase center and stabilize the terminal 3-CCA end of the tRNA. Hydroxylation of the C5 position on Lys-34 may allow additional potential stabilizing hydrogen-bond interactions with the P-tRNA.

The protein resides in the cytoplasm. Its pathway is protein biosynthesis; polypeptide chain elongation. In terms of biological role, involved in peptide bond synthesis. Alleviates ribosome stalling that occurs when 3 or more consecutive Pro residues or the sequence PPG is present in a protein, possibly by augmenting the peptidyl transferase activity of the ribosome. Modification of Lys-34 is required for alleviation. In Marinomonas sp. (strain MWYL1), this protein is Elongation factor P.